The sequence spans 192 residues: Phosphoheptose isomerase (192 aa).

In terms of domain architecture, SIS spans Leu37–Lys192. Asn52–Gly54 lines the substrate pocket. Zn(2+) is bound by residues His61 and Glu65. Residues Glu65, Asn93 to Asp94, Ser119 to Ser121, Ser124, and Gln172 each bind substrate. Zn(2+) contacts are provided by Gln172 and His180.

It belongs to the SIS family. GmhA subfamily. In terms of assembly, homotetramer. Requires Zn(2+) as cofactor.

The protein resides in the cytoplasm. It catalyses the reaction 2 D-sedoheptulose 7-phosphate = D-glycero-alpha-D-manno-heptose 7-phosphate + D-glycero-beta-D-manno-heptose 7-phosphate. It participates in carbohydrate biosynthesis; D-glycero-D-manno-heptose 7-phosphate biosynthesis; D-glycero-alpha-D-manno-heptose 7-phosphate and D-glycero-beta-D-manno-heptose 7-phosphate from sedoheptulose 7-phosphate: step 1/1. Catalyzes the isomerization of sedoheptulose 7-phosphate in D-glycero-D-manno-heptose 7-phosphate. The chain is Phosphoheptose isomerase from Escherichia fergusonii (strain ATCC 35469 / DSM 13698 / CCUG 18766 / IAM 14443 / JCM 21226 / LMG 7866 / NBRC 102419 / NCTC 12128 / CDC 0568-73).